The following is a 343-amino-acid chain: Galactoside alpha-(1,2)-fucosyltransferase 2 (343 aa).

Topologically, residues 1 to 14 are cytoplasmic; it reads MLVVQMPFSFPMAH. The helical; Signal-anchor for type II membrane protein transmembrane segment at 15–28 threads the bilayer; the sequence is FILFVFTVSTIFHV. Residues 29–343 are Lumenal-facing; that stretch reads QQRLAKIQAM…AADLSPLLKH (315 aa). N-linked (GlcNAc...) asparagine glycosylation is found at asparagine 188, asparagine 282, and asparagine 308.

It belongs to the glycosyltransferase 11 family.

It is found in the golgi apparatus. The protein resides in the golgi stack membrane. The catalysed reaction is a beta-D-galactosyl-(1-&gt;3)-N-acetyl-beta-D-glucosaminyl derivative + GDP-beta-L-fucose = an alpha-L-Fuc-(1-&gt;2)-beta-D-Gal-(1-&gt;3)-beta-D-GlcNAc derivative + GDP + H(+). It catalyses the reaction a beta-D-galactosyl-(1-&gt;4)-N-acetyl-beta-D-glucosaminyl derivative + GDP-beta-L-fucose = an alpha-L-Fuc-(1-&gt;2)-beta-D-Gal-(1-&gt;4)-beta-D-GlcNAc derivative + GDP + H(+). The enzyme catalyses a neolactoside nLc4Cer + GDP-beta-L-fucose = a neolactoside IV(2)-alpha-Fuc-nLc4Cer + GDP + H(+). It carries out the reaction a neolactoside nLc4Cer(d18:1(4E)) + GDP-beta-L-fucose = a neolactoside IV(2)-alpha-Fuc-nLc4Cer(d18:1(4E)) + GDP + H(+). The catalysed reaction is a ganglioside GM1 + GDP-beta-L-fucose = a ganglioside Fuc-GM1 + GDP + H(+). It catalyses the reaction a ganglioside GA1 + GDP-beta-L-fucose = a ganglioside Fuc-GA1 + GDP + H(+). The enzyme catalyses Lc4Cer + GDP-beta-L-fucose = alpha-L-fucosyl-(1-&gt;2)-beta-D-galactosyl-(1-&gt;3)-N-acetyl-beta-D-glucosaminyl-(1-&gt;3)-beta-D-galactosyl-(1-&gt;4)-beta-D-glucosyl-(1&lt;-&gt;1')-ceramide + GDP + H(+). It carries out the reaction a beta-D-Gal-(1-&gt;3)-beta-D-GlcNAc-(1-&gt;3)-beta-D-Gal-(1-&gt;4)-beta-D-Glc-(1&lt;-&gt;1')-Cer(d18:1(4E)) + GDP-beta-L-fucose = alpha-L-fucosyl-(1-&gt;2)- beta-D-galactosyl-(1-&gt;3)-N-acetyl-beta-D-glucosaminyl-(1-&gt;3)-beta-D-galactosyl-(1-&gt;4)-beta-D-glucosyl-(1&lt;-&gt;1')-N-acylsphing-4-enine + GDP + H(+). The catalysed reaction is a ganglioside GD1b + GDP-beta-L-fucose = a ganglioside Fuc-GD1b + GDP + H(+). It catalyses the reaction a ganglioside GM1 (d18:1(4E)) + GDP-beta-L-fucose = a ganglioside Fuc-GM1 (d18:1(4E)) + GDP + H(+). The enzyme catalyses a globoside GalGb4Cer (d18:1(4E)) + GDP-beta-L-fucose = a globoside Globo-H (d18:1(4E)) + GDP + H(+). It carries out the reaction a lactoside III(4)-a-Fuc-Lc4Cer + GDP-beta-L-fucose = a lactoside IV(2),III(4)-a-[Fuc]2-Lc4Cer + GDP + H(+). The catalysed reaction is beta-D-galactosyl-(1-&gt;3)-N-acetyl-D-galactosamine + GDP-beta-L-fucose = alpha-L-fucosyl-(1-&gt;2)-beta-D-galactosyl-(1-&gt;3)-N-acetyl-D-galactosamine + GDP + H(+). The protein operates within protein modification; protein glycosylation. In terms of biological role, catalyzes the transfer of L-fucose, from a guanosine diphosphate-beta-L-fucose, to the terminal galactose on both O- and N-linked glycans chains of cell surface glycoproteins and glycolipids and the resulting epitope regulates several processes such as cell-cell interaction including host-microbe interaction, cell surface expression and cell proliferation. Preferentially fucosylates gangliosides GA1 and GM1 in the antrum, cecum and colon and in the female reproductive organs. Fucosylated host glycoproteins or glycolipids mediate interaction with intestinal microbiota influencing its composition. Creates a soluble precursor oligosaccharide FuC-alpha ((1,2)Galbeta-) called the H antigen which is an essential substrate for the final step in the soluble ABO blood group antigen synthesis pathway. This chain is Galactoside alpha-(1,2)-fucosyltransferase 2, found in Gorilla gorilla gorilla (Western lowland gorilla).